The primary structure comprises 104 residues: uncharacterized protein (104 aa).

The tract at residues 55-104 is disordered; the sequence is RPFSSDRINRPFSPDKKGEPIFPDKRDRPFSPDRINRPFSPDKKGEPIFP.

The protein localises to the plastid. This is an uncharacterized protein from Euglena longa (Euglenophycean alga).